A 523-amino-acid chain; its full sequence is Light-independent protochlorophyllide reductase subunit B (523 aa).

Aspartate 36 provides a ligand contact to [4Fe-4S] cluster. Aspartate 290 acts as the Proton donor in catalysis. 425–426 (GL) is a binding site for substrate.

The protein belongs to the ChlB/BchB/BchZ family. In terms of assembly, protochlorophyllide reductase is composed of three subunits; ChlL, ChlN and ChlB. Forms a heterotetramer of two ChlB and two ChlN subunits. [4Fe-4S] cluster is required as a cofactor.

The catalysed reaction is chlorophyllide a + oxidized 2[4Fe-4S]-[ferredoxin] + 2 ADP + 2 phosphate = protochlorophyllide a + reduced 2[4Fe-4S]-[ferredoxin] + 2 ATP + 2 H2O. Its pathway is porphyrin-containing compound metabolism; chlorophyll biosynthesis (light-independent). Component of the dark-operative protochlorophyllide reductase (DPOR) that uses Mg-ATP and reduced ferredoxin to reduce ring D of protochlorophyllide (Pchlide) to form chlorophyllide a (Chlide). This reaction is light-independent. The NB-protein (ChlN-ChlB) is the catalytic component of the complex. In Prochlorococcus marinus (strain MIT 9215), this protein is Light-independent protochlorophyllide reductase subunit B.